We begin with the raw amino-acid sequence, 391 residues long: MAVKKRSIFEEVGQGAKAPVPQGGSIDRGHGGARRGIRLWLMALFLLVMAMIVVGGLTRLTESGLSITEWRPVTGAVPPLNETQWAAEFDKYRDSPQYRLMNAGMTLAEFQRIYWWEWGHRQLGRVIGLVWAVGFLGFLAARRIPRGWWPRLLALGALGGLQGGIGWWMVASGLEGDKVTVESTRLATHLGLAFIILGLIAWQALLLGRSESDLLQARRQKEGRLVTLTTVLIGVAFLQIVLGALVAGIDAGRGFPTWPDMNGTFLPADMFYVPGVETDWRNPAWWLGLLQNPGFVQFLHRMAGYALAALGLIFWIFGRRSRHRATRGAFDLLAMALLAQILLGVGTVLSAAEWQVAIAHQVGAVVIWVLILHARHLALYPRVGSIRKGTL.

8 helical membrane passes run 37-57 (IRLW…VGGL), 121-141 (RQLG…FLAA), 152-172 (LLAL…MVAS), 186-206 (LATH…QALL), 229-249 (TTVL…VAGI), 298-318 (FLHR…WIFG), 332-352 (LLAM…LSAA), and 354-374 (WQVA…ILHA). A heme-binding site is contributed by His-300. His-360 serves as a coordination point for heme.

The protein belongs to the COX15/CtaA family. Type 2 subfamily. Interacts with CtaB. It depends on heme b as a cofactor.

It is found in the cell membrane. It catalyses the reaction Fe(II)-heme o + 2 A + H2O = Fe(II)-heme a + 2 AH2. It participates in porphyrin-containing compound metabolism; heme A biosynthesis; heme A from heme O: step 1/1. Functionally, catalyzes the conversion of heme O to heme A by two successive hydroxylations of the methyl group at C8. The first hydroxylation forms heme I, the second hydroxylation results in an unstable dihydroxymethyl group, which spontaneously dehydrates, resulting in the formyl group of heme A. This is Heme A synthase from Cereibacter sphaeroides (strain KD131 / KCTC 12085) (Rhodobacter sphaeroides).